We begin with the raw amino-acid sequence, 387 residues long: 1-deoxy-D-xylulose 5-phosphate reductoisomerase (387 aa).

T10, G11, S12, V13, N38, and N119 together coordinate NADPH. 1-deoxy-D-xylulose 5-phosphate is bound at residue K120. E121 provides a ligand contact to NADPH. Position 145 (D145) interacts with Mn(2+). 1-deoxy-D-xylulose 5-phosphate-binding residues include S146, E147, S170, and H193. E147 is a binding site for Mn(2+). G199 contributes to the NADPH binding site. Residues S206, N211, K212, and E215 each contribute to the 1-deoxy-D-xylulose 5-phosphate site. Position 215 (E215) interacts with Mn(2+).

This sequence belongs to the DXR family. Requires Mg(2+) as cofactor. Mn(2+) serves as cofactor.

It carries out the reaction 2-C-methyl-D-erythritol 4-phosphate + NADP(+) = 1-deoxy-D-xylulose 5-phosphate + NADPH + H(+). It participates in isoprenoid biosynthesis; isopentenyl diphosphate biosynthesis via DXP pathway; isopentenyl diphosphate from 1-deoxy-D-xylulose 5-phosphate: step 1/6. Its function is as follows. Catalyzes the NADPH-dependent rearrangement and reduction of 1-deoxy-D-xylulose-5-phosphate (DXP) to 2-C-methyl-D-erythritol 4-phosphate (MEP). The protein is 1-deoxy-D-xylulose 5-phosphate reductoisomerase of Wolbachia sp. subsp. Drosophila simulans (strain wRi).